Consider the following 343-residue polypeptide: ATPase GET3 (343 aa).

32-39 lines the ATP pocket; it reads KGGVGKTT. Aspartate 61 is an active-site residue. Positions 245 and 272 each coordinate ATP. Residues cysteine 283 and cysteine 286 each contribute to the Zn(2+) site.

The protein belongs to the arsA ATPase family. Homodimer.

The protein localises to the cytoplasm. It localises to the endoplasmic reticulum. Its function is as follows. ATPase required for the post-translational delivery of tail-anchored (TA) proteins to the endoplasmic reticulum. Recognizes and selectively binds the transmembrane domain of TA proteins in the cytosol. This complex then targets to the endoplasmic reticulum by membrane-bound receptors, where the tail-anchored protein is released for insertion. This process is regulated by ATP binding and hydrolysis. ATP binding drives the homodimer towards the closed dimer state, facilitating recognition of newly synthesized TA membrane proteins. ATP hydrolysis is required for insertion. Subsequently, the homodimer reverts towards the open dimer state, lowering its affinity for the membrane-bound receptor, and returning it to the cytosol to initiate a new round of targeting. The polypeptide is ATPase GET3 (Pyricularia oryzae (strain 70-15 / ATCC MYA-4617 / FGSC 8958) (Rice blast fungus)).